The primary structure comprises 196 residues: Imidazoleglycerol-phosphate dehydratase (196 aa).

This sequence belongs to the imidazoleglycerol-phosphate dehydratase family.

The protein localises to the cytoplasm. The enzyme catalyses D-erythro-1-(imidazol-4-yl)glycerol 3-phosphate = 3-(imidazol-4-yl)-2-oxopropyl phosphate + H2O. It functions in the pathway amino-acid biosynthesis; L-histidine biosynthesis; L-histidine from 5-phospho-alpha-D-ribose 1-diphosphate: step 6/9. In Akkermansia muciniphila (strain ATCC BAA-835 / DSM 22959 / JCM 33894 / BCRC 81048 / CCUG 64013 / CIP 107961 / Muc), this protein is Imidazoleglycerol-phosphate dehydratase.